The following is a 229-amino-acid chain: uncharacterized protein (229 aa).

This is an uncharacterized protein from Ureaplasma parvum serovar 3 (strain ATCC 700970).